Consider the following 570-residue polypeptide: Proline--tRNA ligase (570 aa).

The interval 238–257 (ARPAPAEHAEPRPLEKVETP) is disordered.

Belongs to the class-II aminoacyl-tRNA synthetase family. ProS type 1 subfamily. In terms of assembly, homodimer.

The protein localises to the cytoplasm. The catalysed reaction is tRNA(Pro) + L-proline + ATP = L-prolyl-tRNA(Pro) + AMP + diphosphate. Functionally, catalyzes the attachment of proline to tRNA(Pro) in a two-step reaction: proline is first activated by ATP to form Pro-AMP and then transferred to the acceptor end of tRNA(Pro). As ProRS can inadvertently accommodate and process non-cognate amino acids such as alanine and cysteine, to avoid such errors it has two additional distinct editing activities against alanine. One activity is designated as 'pretransfer' editing and involves the tRNA(Pro)-independent hydrolysis of activated Ala-AMP. The other activity is designated 'posttransfer' editing and involves deacylation of mischarged Ala-tRNA(Pro). The misacylated Cys-tRNA(Pro) is not edited by ProRS. This is Proline--tRNA ligase from Geobacter sulfurreducens (strain ATCC 51573 / DSM 12127 / PCA).